Reading from the N-terminus, the 185-residue chain is Ribonuclease HII (185 aa).

Positions 1–185 constitute an RNase H type-2 domain; sequence MKICGIDEAG…LKHLQGILEF (185 aa). Positions 7, 8, and 96 each coordinate a divalent metal cation.

This sequence belongs to the RNase HII family. Requires Mn(2+) as cofactor. The cofactor is Mg(2+).

The protein localises to the cytoplasm. The enzyme catalyses Endonucleolytic cleavage to 5'-phosphomonoester.. Its function is as follows. Endonuclease that specifically degrades the RNA of RNA-DNA hybrids. This is Ribonuclease HII from Campylobacter hominis (strain ATCC BAA-381 / DSM 21671 / CCUG 45161 / LMG 19568 / NCTC 13146 / CH001A).